Here is a 25-residue protein sequence, read N- to C-terminus: Chitinolytic alpha-amylase inhibitor PvCAI (25 aa).

In terms of assembly, homodimer.

The catalysed reaction is Random endo-hydrolysis of N-acetyl-beta-D-glucosaminide (1-&gt;4)-beta-linkages in chitin and chitodextrins.. Its function is as follows. Alpha-amylase inhibitor, active against Z.subfasciatus alpha-amylase (ZSA) but not porcine pancreatic alpha-amylase (PPA). Has chitinase activity. This Phaseolus vulgaris (Kidney bean) protein is Chitinolytic alpha-amylase inhibitor PvCAI.